The sequence spans 91 residues: Small ribosomal subunit protein bS20 (91 aa).

Residues 1 to 25 form a disordered region; it reads MANTKSAEKRHRQSLKRRARNVTVR. Residues 8 to 20 show a composition bias toward basic residues; that stretch reads EKRHRQSLKRRAR.

The protein belongs to the bacterial ribosomal protein bS20 family.

Its function is as follows. Binds directly to 16S ribosomal RNA. The sequence is that of Small ribosomal subunit protein bS20 from Myxococcus xanthus (strain DK1622).